The following is a 264-amino-acid chain: S-adenosylmethionine decarboxylase proenzyme (264 aa).

Residue serine 112 is the Schiff-base intermediate with substrate; via pyruvic acid of the active site. Serine 112 carries the post-translational modification Pyruvic acid (Ser); by autocatalysis. Residue histidine 117 is the Proton acceptor; for processing activity of the active site. Catalysis depends on cysteine 140, which acts as the Proton donor; for catalytic activity.

It belongs to the prokaryotic AdoMetDC family. Type 2 subfamily. Heterooctamer of four alpha and four beta chains arranged as a tetramer of alpha/beta heterodimers. It depends on pyruvate as a cofactor. Post-translationally, is synthesized initially as an inactive proenzyme. Formation of the active enzyme involves a self-maturation process in which the active site pyruvoyl group is generated from an internal serine residue via an autocatalytic post-translational modification. Two non-identical subunits are generated from the proenzyme in this reaction, and the pyruvate is formed at the N-terminus of the alpha chain, which is derived from the carboxyl end of the proenzyme. The post-translation cleavage follows an unusual pathway, termed non-hydrolytic serinolysis, in which the side chain hydroxyl group of the serine supplies its oxygen atom to form the C-terminus of the beta chain, while the remainder of the serine residue undergoes an oxidative deamination to produce ammonia and the pyruvoyl group blocking the N-terminus of the alpha chain.

The enzyme catalyses S-adenosyl-L-methionine + H(+) = S-adenosyl 3-(methylsulfanyl)propylamine + CO2. It participates in amine and polyamine biosynthesis; S-adenosylmethioninamine biosynthesis; S-adenosylmethioninamine from S-adenosyl-L-methionine: step 1/1. Functionally, catalyzes the decarboxylation of S-adenosylmethionine to S-adenosylmethioninamine (dcAdoMet), the propylamine donor required for the synthesis of the polyamines spermine and spermidine from the diamine putrescine. This chain is S-adenosylmethionine decarboxylase proenzyme, found in Hamiltonella defensa subsp. Acyrthosiphon pisum (strain 5AT).